The following is a 201-amino-acid chain: Large ribosomal subunit protein uL4 (201 aa).

Residues 51 to 73 (EVTGSGKKPWRQKGTGRARAGSV) are disordered.

It belongs to the universal ribosomal protein uL4 family. Part of the 50S ribosomal subunit.

In terms of biological role, one of the primary rRNA binding proteins, this protein initially binds near the 5'-end of the 23S rRNA. It is important during the early stages of 50S assembly. It makes multiple contacts with different domains of the 23S rRNA in the assembled 50S subunit and ribosome. Functionally, forms part of the polypeptide exit tunnel. The sequence is that of Large ribosomal subunit protein uL4 from Erwinia tasmaniensis (strain DSM 17950 / CFBP 7177 / CIP 109463 / NCPPB 4357 / Et1/99).